We begin with the raw amino-acid sequence, 199 residues long: MKVILNEDVKYLGEEGDIKNVAKGYARNYLFPRNLAVPCNEFTLAHFESRKEEIEAKKAAKRQDAAGLKEKLEALSIKILMPAGPNGKLYGAVTTQTLFDELQKLNFDIERKRIEILGQTVKSTGVHKAIVKLYENTSAEISFTVEAQIAEEKPVKASEKKGRRPRRDEEASDEQILAEENSVTEEAVSEEIQNSESEN.

The segment at 153-199 is disordered; that stretch reads KPVKASEKKGRRPRRDEEASDEQILAEENSVTEEAVSEEIQNSESEN.

This sequence belongs to the bacterial ribosomal protein bL9 family.

In terms of biological role, binds to the 23S rRNA. This is Large ribosomal subunit protein bL9 from Treponema denticola (strain ATCC 35405 / DSM 14222 / CIP 103919 / JCM 8153 / KCTC 15104).